The chain runs to 165 residues: UPF0303 protein Bphy_1660 (165 aa).

This sequence belongs to the UPF0303 family.

The protein is UPF0303 protein Bphy_1660 of Paraburkholderia phymatum (strain DSM 17167 / CIP 108236 / LMG 21445 / STM815) (Burkholderia phymatum).